Reading from the N-terminus, the 611-residue chain is tRNA uridine 5-carboxymethylaminomethyl modification enzyme MnmG (611 aa).

FAD-binding positions include 12-17 (GGGHAG), V124, and S179. 271–285 (GPRYCPSVEDKIVRF) lines the NAD(+) pocket. Q368 is a binding site for FAD.

It belongs to the MnmG family. Homodimer. Heterotetramer of two MnmE and two MnmG subunits. It depends on FAD as a cofactor.

The protein resides in the cytoplasm. NAD-binding protein involved in the addition of a carboxymethylaminomethyl (cmnm) group at the wobble position (U34) of certain tRNAs, forming tRNA-cmnm(5)s(2)U34. This chain is tRNA uridine 5-carboxymethylaminomethyl modification enzyme MnmG, found in Mycoplasma mobile (strain ATCC 43663 / 163K / NCTC 11711) (Mesomycoplasma mobile).